Here is a 517-residue protein sequence, read N- to C-terminus: Phenol 2-monooxygenase, oxygenase component DmpN (517 aa).

Fe cation-binding residues include Glu109, Glu139, His142, Glu200, Glu234, and His237.

It belongs to the TmoA/XamoA family. In terms of assembly, the multicomponent enzyme phenol hydroxylase is formed by DmpL (P1 component), DmpM (P2 component), DmpN (P3 component), DmpO (P4 component) and DmpP (P5 component). The oxygenase component is a dimer composed of three subunits, DmpL, DmpN and DmpO (DmpLNO). DmpN interacts with the auxiliary protein DmpK (P0 component). Requires Fe(2+) as cofactor.

The catalysed reaction is phenol + NADH + O2 + H(+) = catechol + NAD(+) + H2O. It participates in aromatic compound metabolism; phenol degradation. Requires DmpM for efficient turnover. The activity of DmpLNO oxygenase is inhibited by dithiothreitol (DTT) by a mechanism apparently involving H(2)O(2) generation. Part of a multicomponent enzyme which catalyzes the degradation of phenol and some of its methylated derivatives. DmpL, DmpN and DmpO form the oxygenase component of the complex. Required for growth on phenol and for in vitro phenol hydroxylase activity. The protein is Phenol 2-monooxygenase, oxygenase component DmpN of Pseudomonas sp. (strain CF600).